The sequence spans 41 residues: Protein UL21 homolog (41 aa).

This sequence belongs to the herpesviridae UL21 family.

The polypeptide is Protein UL21 homolog (Equine herpesvirus 4 (strain 1942) (EHV-4)).